We begin with the raw amino-acid sequence, 296 residues long: Ribosomal RNA small subunit methyltransferase A (296 aa).

The span at Met-1–Gly-11 shows a compositional bias: basic and acidic residues. A disordered region spans residues Met-1–Ser-24. Residues Ser-12–Ser-24 are compositionally biased toward polar residues. Residues Asn-43, Leu-45, Gly-70, Glu-91, Asp-113, and Asn-135 each contribute to the S-adenosyl-L-methionine site.

The protein belongs to the class I-like SAM-binding methyltransferase superfamily. rRNA adenine N(6)-methyltransferase family. RsmA subfamily.

The protein localises to the cytoplasm. It catalyses the reaction adenosine(1518)/adenosine(1519) in 16S rRNA + 4 S-adenosyl-L-methionine = N(6)-dimethyladenosine(1518)/N(6)-dimethyladenosine(1519) in 16S rRNA + 4 S-adenosyl-L-homocysteine + 4 H(+). Specifically dimethylates two adjacent adenosines (A1518 and A1519) in the loop of a conserved hairpin near the 3'-end of 16S rRNA in the 30S particle. May play a critical role in biogenesis of 30S subunits. This is Ribosomal RNA small subunit methyltransferase A from Salinibacter ruber (strain DSM 13855 / M31).